The sequence spans 90 residues: Small ribosomal subunit protein bS18 (90 aa).

This sequence belongs to the bacterial ribosomal protein bS18 family. Part of the 30S ribosomal subunit. Forms a tight heterodimer with protein bS6.

In terms of biological role, binds as a heterodimer with protein bS6 to the central domain of the 16S rRNA, where it helps stabilize the platform of the 30S subunit. The sequence is that of Small ribosomal subunit protein bS18 from Bordetella bronchiseptica (strain ATCC BAA-588 / NCTC 13252 / RB50) (Alcaligenes bronchisepticus).